The primary structure comprises 300 residues: Heme A synthase (300 aa).

Residues M1–K8 are Cytoplasmic-facing. Residues W9–T29 traverse the membrane as a helical segment. Residues K30 to R64 lie on the Extracellular side of the membrane. C37 and C44 are joined by a disulfide. E60 is a catalytic residue. H63 serves as a coordination point for heme o. A helical membrane pass occupies residues G65 to I85. At G86–K92 the chain is on the cytoplasmic side. A helical membrane pass occupies residues F93 to V113. The Extracellular segment spans residues M114 to A123. Residues L124–F144 traverse the membrane as a helical segment. Heme o is bound at residue H125. Residues E145–R163 are Cytoplasmic-facing. Residues H164–H184 traverse the membrane as a helical segment. Residues E185–T218 lie on the Extracellular side of the membrane. A disulfide bridge connects residues C191 and C197. Position 216 (H216) interacts with heme b. Residues L219–A239 form a helical membrane-spanning segment. Over Q240–M249 the chain is Cytoplasmic. The helical transmembrane segment at I250 to V270 threads the bilayer. The Extracellular portion of the chain corresponds to N271–A275. The helical transmembrane segment at L276–I296 threads the bilayer. Residue H278 participates in heme b binding. The Cytoplasmic portion of the chain corresponds to S297–K300.

The protein belongs to the COX15/CtaA family. Type 1 subfamily. In terms of assembly, interacts with CtaB. Requires heme b as cofactor.

The protein localises to the cell membrane. It catalyses the reaction Fe(II)-heme o + 2 A + H2O = Fe(II)-heme a + 2 AH2. It participates in porphyrin-containing compound metabolism; heme A biosynthesis; heme A from heme O: step 1/1. Its function is as follows. Catalyzes the conversion of heme O to heme A by two successive hydroxylations of the methyl group at C8. The first hydroxylation forms heme I, the second hydroxylation results in an unstable dihydroxymethyl group, which spontaneously dehydrates, resulting in the formyl group of heme A. The polypeptide is Heme A synthase (Macrococcus caseolyticus (strain JCSC5402) (Macrococcoides caseolyticum)).